The chain runs to 219 residues: Translation initiation factor IF-3 (219 aa).

The protein belongs to the IF-3 family. Monomer.

Its subcellular location is the cytoplasm. Its function is as follows. IF-3 binds to the 30S ribosomal subunit and shifts the equilibrium between 70S ribosomes and their 50S and 30S subunits in favor of the free subunits, thus enhancing the availability of 30S subunits on which protein synthesis initiation begins. This is Translation initiation factor IF-3 from Prochlorococcus marinus (strain MIT 9313).